The primary structure comprises 378 residues: tRNA-specific 2-thiouridylase MnmA (378 aa).

Residues 9 to 16 (GVSGGVDS) and methionine 35 each bind ATP. Residues 94 to 96 (NPD) form an interaction with target base in tRNA region. Cysteine 99 (nucleophile) is an active-site residue. Cysteine 99 and cysteine 195 are oxidised to a cystine. ATP is bound at residue glycine 123. Residues 145-147 (KDQ) are interaction with tRNA. The active-site Cysteine persulfide intermediate is cysteine 195. Residues 307–308 (RY) are interaction with tRNA.

The protein belongs to the MnmA/TRMU family.

Its subcellular location is the cytoplasm. It catalyses the reaction S-sulfanyl-L-cysteinyl-[protein] + uridine(34) in tRNA + AH2 + ATP = 2-thiouridine(34) in tRNA + L-cysteinyl-[protein] + A + AMP + diphosphate + H(+). Catalyzes the 2-thiolation of uridine at the wobble position (U34) of tRNA, leading to the formation of s(2)U34. This chain is tRNA-specific 2-thiouridylase MnmA, found in Xanthomonas euvesicatoria pv. vesicatoria (strain 85-10) (Xanthomonas campestris pv. vesicatoria).